The sequence spans 73 residues: Probable movement protein p8 (73 aa).

The segment covering 1–12 (MSTVETPAQDTL) has biased composition (polar residues). The interval 1-48 (MSTVETPAQDTLATKEPNKTGAKDRQQARSARLSVAAGAGRTALSQRD) is disordered. Residues 16–27 (EPNKTGAKDRQQ) show a composition bias toward basic and acidic residues.

The protein belongs to the carmovirus/necrovirus/panicovirus movement protein p8 family.

The protein resides in the host cell wall. Its function is as follows. Cell-to-cell movement. In Muhlenbergia (Blackwell switchgrass), this protein is Probable movement protein p8.